A 456-amino-acid polypeptide reads, in one-letter code: NADPH-ferredoxin reductase FprA (456 aa).

Residues Ser17, Glu43, Leu51, and Val87 each coordinate FAD. Residues Arg113, 158–161 (NGNV), 202–203 (RR), and Glu214 contribute to the NADP(+) site. Residues Trp362 and 369–371 (GVI) each bind FAD. NADP(+) is bound at residue Gly369.

This sequence belongs to the ferredoxin--NADP reductase type 1 family. Monomer. Requires FAD as cofactor.

The enzyme catalyses 2 reduced [2Fe-2S]-[ferredoxin] + NADP(+) + H(+) = 2 oxidized [2Fe-2S]-[ferredoxin] + NADPH. May serve as electron transfer protein and supply electrons to P450 systems. This Mycobacterium leprae (strain TN) protein is NADPH-ferredoxin reductase FprA (fprA).